The sequence spans 146 residues: Stress enhanced protein 1, chloroplastic (146 aa).

The transit peptide at 1–73 (MALSQVSASL…GNRAASVSIR (73 aa)) directs the protein to the chloroplast. Transmembrane regions (helical) follow at residues 84 to 104 (LDIW…TVEI) and 120 to 140 (LPTV…VFIF).

The protein belongs to the ELIP/psbS family.

Its subcellular location is the plastid. It is found in the chloroplast thylakoid membrane. Its function is as follows. May be involved in non-photochemical quenching, a process that maintains the balance between dissipation and utilization of light energy to minimize generation of oxidizing molecules, thereby protecting the plant against photo-oxidative damage. May play a photoprotective role in the thylakoid membrane in response to light stress. This is Stress enhanced protein 1, chloroplastic from Arabidopsis thaliana (Mouse-ear cress).